Consider the following 139-residue polypeptide: Transcription antitermination protein NusB (139 aa).

Belongs to the NusB family.

In terms of biological role, involved in transcription antitermination. Required for transcription of ribosomal RNA (rRNA) genes. Binds specifically to the boxA antiterminator sequence of the ribosomal RNA (rrn) operons. In Rubrobacter xylanophilus (strain DSM 9941 / JCM 11954 / NBRC 16129 / PRD-1), this protein is Transcription antitermination protein NusB.